We begin with the raw amino-acid sequence, 165 residues long: V-type proton ATPase 16 kDa proteolipid subunit (165 aa).

Topologically, residues 1 to 10 (MSSTFSGDET) are lumenal. Residues 11 to 33 (APFFGFLGAAAALVFSCMGAAYG) form a helical membrane-spanning segment. Over 34–55 (TAKSGVGVASMGVMRPELVMKS) the chain is Cytoplasmic. Residues 56 to 76 (IVPVVMAGVLGIYGLIIAVII) form a helical membrane-spanning segment. The Lumenal portion of the chain corresponds to 77-95 (STGINPKAKSYYLFDGYAH). A helical membrane pass occupies residues 96–117 (LSSGLACGLAGLSAGMAIGIVG). Topologically, residues 118 to 129 (DAGVRANAQQPK) are cytoplasmic. The chain crosses the membrane as a helical span at residues 130-155 (LFVGMILILIFAEALALYGLIVGIIL). Residues 156 to 165 (SSRAGQSRAE) are Lumenal-facing.

The protein belongs to the V-ATPase proteolipid subunit family. As to quaternary structure, V-ATPase is a heteromultimeric enzyme composed of a peripheral catalytic V1 complex (main components: subunits A, B, C, D, E, and F) attached to an integral membrane V0 proton pore complex (main component: the proteolipid protein; which is present as a hexamer that forms the proton-conducting pore).

It localises to the vacuole membrane. Functionally, proton-conducting pore forming subunit of the membrane integral V0 complex of vacuolar ATPase. V-ATPase is responsible for acidifying a variety of intracellular compartments in eukaryotic cells. The protein is V-type proton ATPase 16 kDa proteolipid subunit (CVA16-2) of Gossypium hirsutum (Upland cotton).